The primary structure comprises 151 residues: Deoxyuridine 5'-triphosphate nucleotidohydrolase (151 aa).

Substrate-binding positions include 70 to 72, Asn83, 87 to 89, and Met97; these read RSG and LID.

Belongs to the dUTPase family. Requires Mg(2+) as cofactor.

It carries out the reaction dUTP + H2O = dUMP + diphosphate + H(+). Its pathway is pyrimidine metabolism; dUMP biosynthesis; dUMP from dCTP (dUTP route): step 2/2. Its function is as follows. This enzyme is involved in nucleotide metabolism: it produces dUMP, the immediate precursor of thymidine nucleotides and it decreases the intracellular concentration of dUTP so that uracil cannot be incorporated into DNA. In Histophilus somni (strain 129Pt) (Haemophilus somnus), this protein is Deoxyuridine 5'-triphosphate nucleotidohydrolase.